A 122-amino-acid polypeptide reads, in one-letter code: uncharacterized protein (122 aa).

A signal peptide spans 1–18 (MYSMAFLASSGLVANSSA). An N-linked (GlcNAc...) asparagine glycan is attached at N15.

This is an uncharacterized protein from Saccharomyces cerevisiae (strain ATCC 204508 / S288c) (Baker's yeast).